A 198-amino-acid chain; its full sequence is Holliday junction branch migration complex subunit RuvA (198 aa).

The tract at residues 1–64 (MYEYIKGEYM…EDFIGLYGFE (64 aa)) is domain I. Residues 65–143 (SLEELEMFKM…TDELLNCIDE (79 aa)) form a domain II region. Residues 144 to 154 (FDDVTQDNSLA) form a flexible linker region. Positions 154 to 198 (AVSEALSALISLGYTEKEAEKVLRDVDKSESVENIIKSALVKLMG) are domain III.

This sequence belongs to the RuvA family. As to quaternary structure, homotetramer. Forms an RuvA(8)-RuvB(12)-Holliday junction (HJ) complex. HJ DNA is sandwiched between 2 RuvA tetramers; dsDNA enters through RuvA and exits via RuvB. An RuvB hexamer assembles on each DNA strand where it exits the tetramer. Each RuvB hexamer is contacted by two RuvA subunits (via domain III) on 2 adjacent RuvB subunits; this complex drives branch migration. In the full resolvosome a probable DNA-RuvA(4)-RuvB(12)-RuvC(2) complex forms which resolves the HJ.

It localises to the cytoplasm. Functionally, the RuvA-RuvB-RuvC complex processes Holliday junction (HJ) DNA during genetic recombination and DNA repair, while the RuvA-RuvB complex plays an important role in the rescue of blocked DNA replication forks via replication fork reversal (RFR). RuvA specifically binds to HJ cruciform DNA, conferring on it an open structure. The RuvB hexamer acts as an ATP-dependent pump, pulling dsDNA into and through the RuvAB complex. HJ branch migration allows RuvC to scan DNA until it finds its consensus sequence, where it cleaves and resolves the cruciform DNA. The protein is Holliday junction branch migration complex subunit RuvA of Clostridium botulinum (strain Eklund 17B / Type B).